The chain runs to 427 residues: GTPase Obg (427 aa).

In terms of domain architecture, Obg spans Met-1–Ile-158. The 172-residue stretch at Ala-159–Lys-330 folds into the OBG-type G domain. Residues Gly-165 to Ser-172, Phe-190 to Thr-194, Asp-212 to Gly-215, Asn-282 to Asp-285, and Ser-311 to Ala-313 contribute to the GTP site. Ser-172 and Thr-192 together coordinate Mg(2+). One can recognise an OCT domain in the interval Leu-347–His-427.

It belongs to the TRAFAC class OBG-HflX-like GTPase superfamily. OBG GTPase family. Monomer. Mg(2+) serves as cofactor.

The protein resides in the cytoplasm. Its function is as follows. An essential GTPase which binds GTP, GDP and possibly (p)ppGpp with moderate affinity, with high nucleotide exchange rates and a fairly low GTP hydrolysis rate. Plays a role in control of the cell cycle, stress response, ribosome biogenesis and in those bacteria that undergo differentiation, in morphogenesis control. The sequence is that of GTPase Obg from Alkaliphilus metalliredigens (strain QYMF).